The primary structure comprises 480 residues: Glycogen synthase (480 aa).

K15 contacts ADP-alpha-D-glucose.

The protein belongs to the glycosyltransferase 1 family. Bacterial/plant glycogen synthase subfamily.

The enzyme catalyses [(1-&gt;4)-alpha-D-glucosyl](n) + ADP-alpha-D-glucose = [(1-&gt;4)-alpha-D-glucosyl](n+1) + ADP + H(+). The protein operates within glycan biosynthesis; glycogen biosynthesis. Its function is as follows. Synthesizes alpha-1,4-glucan chains using ADP-glucose. This chain is Glycogen synthase, found in Clostridioides difficile (strain 630) (Peptoclostridium difficile).